Reading from the N-terminus, the 213-residue chain is tRNA (guanine-N(7)-)-methyltransferase (213 aa).

S-adenosyl-L-methionine-binding residues include Glu-43, Asp-68, Asn-95, and Asn-117. Substrate contacts are provided by residues Asp-153 and 190–193 (TEYE).

Belongs to the class I-like SAM-binding methyltransferase superfamily. TrmB family.

It catalyses the reaction guanosine(46) in tRNA + S-adenosyl-L-methionine = N(7)-methylguanosine(46) in tRNA + S-adenosyl-L-homocysteine. It participates in tRNA modification; N(7)-methylguanine-tRNA biosynthesis. Its function is as follows. Catalyzes the formation of N(7)-methylguanine at position 46 (m7G46) in tRNA. This is tRNA (guanine-N(7)-)-methyltransferase from Desulfitobacterium hafniense (strain DSM 10664 / DCB-2).